Here is a 321-residue protein sequence, read N- to C-terminus: Glucokinase (321 aa).

8–13 (GDVGGT) lines the ATP pocket.

The protein belongs to the bacterial glucokinase family.

It is found in the cytoplasm. The catalysed reaction is D-glucose + ATP = D-glucose 6-phosphate + ADP + H(+). This chain is Glucokinase, found in Salmonella paratyphi B (strain ATCC BAA-1250 / SPB7).